The sequence spans 482 residues: Probable 2-carboxy-D-arabinitol-1-phosphatase (482 aa).

Residues 1 to 34 (MISLPLTTPILPSRCLLHKTRRQNSTRRRLLIRS) constitute a chloroplast transit peptide. The active-site Tele-phosphohistidine intermediate is His55. The active-site Proton donor/acceptor is the Glu129.

The protein belongs to the phosphoglycerate mutase family.

It localises to the plastid. It is found in the chloroplast stroma. The enzyme catalyses 2-carboxy-D-arabinitol 1-phosphate + H2O = 2-carboxy-D-arabinitol + phosphate. In terms of biological role, phosphoglycerate mutase-like protein lacking PGM activity, but having 2-carboxy-D-arabinitol 1-phosphate (CA1P) phosphatase activity. Prevents the accumulation of D-glycero-2,3-pentodiulose-1,5-bisphosphate (PDBP) a potent inhibitor of ribulose-1,5-bisphosphate carboxylase (RuBisCO). PDBP is produced during the oxidation of ribulose-1,5-bisphosphate, the substrate of RuBisCO. This chain is Probable 2-carboxy-D-arabinitol-1-phosphatase, found in Arabidopsis thaliana (Mouse-ear cress).